We begin with the raw amino-acid sequence, 345 residues long: Protein sdf-9 (345 aa).

Residues 33 to 284 enclose the Tyrosine-protein phosphatase domain; the sequence is NRNRVVKIVP…SFIYEAVLDY (252 aa).

Belongs to the protein-tyrosine phosphatase family. Expressed in the 2 embryonic head hypodermal cells XXXL/R.

Its subcellular location is the cytoplasm. The protein localises to the cell membrane. Its function is as follows. Together with eak-4 and phosphatase eak-6, negatively regulates dauer larva formation downstream of insulin-like receptor daf-2 and in parallel of age-1, pdk-1 and akt-1. The protein is Protein sdf-9 of Caenorhabditis elegans.